We begin with the raw amino-acid sequence, 517 residues long: Protein IQ-DOMAIN 13 (517 aa).

The segment at 1 to 11 (MGKKGSWFSAI) is calmodulin-binding. Disordered regions lie at residues 1 to 60 (MGKK…FLPI) and 81 to 147 (VFRP…PRAV). A compositionally biased stretch (basic residues) spans 40 to 49 (KKKKGFGKKL). Residues 89 to 99 (DRANSSSTSVA) show a composition bias toward polar residues. Residues 134 to 144 (PKPPSPKPPSP) show a composition bias toward pro residues. 2 consecutive IQ domains span residues 168 to 196 (KNAY…GLVR) and 197 to 218 (LQGV…KYMQ). Disordered stretches follow at residues 324–407 (QPFR…LTSC) and 425–452 (KLRA…SSFP). Positions 328–342 (LTPTRPSLSPQPQSS) are enriched in low complexity. A compositionally biased stretch (polar residues) spans 343-367 (NQNHFRLNNSFDTSTPNSSKSTFVT). The segment covering 432-448 (PKERMDRTPVSTNEKRR) has biased composition (basic and acidic residues).

The protein belongs to the IQD family. As to quaternary structure, binds to multiple calmodulin (CaM) in the presence of Ca(2+) and CaM-like proteins. Expressed in vessels of roots, cotyledons and leaves, as well as in trichomes.

The protein localises to the cell membrane. Its subcellular location is the cytoplasm. The protein resides in the cytoskeleton. Functionally, may be involved in cooperative interactions with calmodulins or calmodulin-like proteins. Recruits calmodulin proteins to microtubules, thus being a potential scaffold in cellular signaling and trafficking. Regulates the formation of oval xylem secondary cell-wall deposition pits through microtubule-dependent lateral inhibition of Rho GTPase domains, thus confining the area of active ROP domains within the lattice of the cortical microtubules. May associate with nucleic acids and regulate gene expression at the transcriptional or post-transcriptional level. This Arabidopsis thaliana (Mouse-ear cress) protein is Protein IQ-DOMAIN 13.